A 192-amino-acid polypeptide reads, in one-letter code: Ion-translocating oxidoreductase complex subunit B (192 aa).

The interval 1 to 26 is hydrophobic; that stretch reads MNAFWIAVAAVSLLGLAFGAILGYAS. The region spanning 32 to 91 is the 4Fe-4S domain; it reads EDDPVVEKIDEILPQSQCGQCGYPGCRPYAEAISCNGEKINRCAPGGEAVMLKIAELLNV. Cys49, Cys52, Cys57, Cys74, Cys117, Cys120, Cys123, Cys127, Cys147, Cys150, Cys153, and Cys157 together coordinate [4Fe-4S] cluster. 4Fe-4S ferredoxin-type domains lie at 108–137 and 138–167; these read MVAV…GATR and AMHT…LQPV.

Belongs to the 4Fe4S bacterial-type ferredoxin family. RnfB subfamily. The complex is composed of six subunits: RsxA, RsxB, RsxC, RsxD, RsxE and RsxG. Requires [4Fe-4S] cluster as cofactor.

Its subcellular location is the cell inner membrane. In terms of biological role, part of a membrane-bound complex that couples electron transfer with translocation of ions across the membrane. Required to maintain the reduced state of SoxR. This Escherichia coli O6:H1 (strain CFT073 / ATCC 700928 / UPEC) protein is Ion-translocating oxidoreductase complex subunit B.